The chain runs to 602 residues: Elongation factor 4 (602 aa).

Positions 5–187 constitute a tr-type G domain; it reads DHIRNFSIIA…ALVKRIPAPK (183 aa). GTP is bound by residues 17–22 and 134–137; these read DHGKST and NKID.

It belongs to the TRAFAC class translation factor GTPase superfamily. Classic translation factor GTPase family. LepA subfamily.

The protein resides in the cell inner membrane. The catalysed reaction is GTP + H2O = GDP + phosphate + H(+). Its function is as follows. Required for accurate and efficient protein synthesis under certain stress conditions. May act as a fidelity factor of the translation reaction, by catalyzing a one-codon backward translocation of tRNAs on improperly translocated ribosomes. Back-translocation proceeds from a post-translocation (POST) complex to a pre-translocation (PRE) complex, thus giving elongation factor G a second chance to translocate the tRNAs correctly. Binds to ribosomes in a GTP-dependent manner. The polypeptide is Elongation factor 4 (Zymomonas mobilis subsp. mobilis (strain ATCC 31821 / ZM4 / CP4)).